Consider the following 242-residue polypeptide: Probable septum site-determining protein MinC (242 aa).

It belongs to the MinC family. Interacts with MinD and FtsZ.

Its function is as follows. Cell division inhibitor that blocks the formation of polar Z ring septums. Rapidly oscillates between the poles of the cell to destabilize FtsZ filaments that have formed before they mature into polar Z rings. Prevents FtsZ polymerization. The sequence is that of Probable septum site-determining protein MinC from Brucella anthropi (strain ATCC 49188 / DSM 6882 / CCUG 24695 / JCM 21032 / LMG 3331 / NBRC 15819 / NCTC 12168 / Alc 37) (Ochrobactrum anthropi).